The following is a 311-amino-acid chain: Tyrosine recombinase XerD (311 aa).

Positions 3 to 88 (DMSAAYVEAF…ALRQFYKFLY (86 aa)) constitute a Core-binding (CB) domain. One can recognise a Tyr recombinase domain in the interval 109 to 298 (TLPKTLSIED…LEERLHDLVQ (190 aa)). Catalysis depends on residues Arg-156, Lys-180, His-250, Arg-253, and His-276. Tyr-285 functions as the O-(3'-phospho-DNA)-tyrosine intermediate in the catalytic mechanism.

This sequence belongs to the 'phage' integrase family. XerD subfamily. In terms of assembly, forms a cyclic heterotetrameric complex composed of two molecules of XerC and two molecules of XerD.

It is found in the cytoplasm. In terms of biological role, site-specific tyrosine recombinase, which acts by catalyzing the cutting and rejoining of the recombining DNA molecules. The XerC-XerD complex is essential to convert dimers of the bacterial chromosome into monomers to permit their segregation at cell division. It also contributes to the segregational stability of plasmids. This Rhizobium meliloti (strain 1021) (Ensifer meliloti) protein is Tyrosine recombinase XerD.